The following is a 294-amino-acid chain: Ribosomal RNA small subunit methyltransferase A (294 aa).

6 residues coordinate S-adenosyl-L-methionine: N31, L33, G58, E79, D111, and N136.

This sequence belongs to the class I-like SAM-binding methyltransferase superfamily. rRNA adenine N(6)-methyltransferase family. RsmA subfamily.

It is found in the cytoplasm. It carries out the reaction adenosine(1518)/adenosine(1519) in 16S rRNA + 4 S-adenosyl-L-methionine = N(6)-dimethyladenosine(1518)/N(6)-dimethyladenosine(1519) in 16S rRNA + 4 S-adenosyl-L-homocysteine + 4 H(+). Functionally, specifically dimethylates two adjacent adenosines (A1518 and A1519) in the loop of a conserved hairpin near the 3'-end of 16S rRNA in the 30S particle. May play a critical role in biogenesis of 30S subunits. The polypeptide is Ribosomal RNA small subunit methyltransferase A (Lactobacillus helveticus (strain DPC 4571)).